Consider the following 511-residue polypeptide: Ectonucleoside triphosphate diphosphohydrolase 1 (511 aa).

Residues 1 to 16 (MEDIKDSKVKRFCSKN) are Cytoplasmic-facing. The chain crosses the membrane as a helical span at residues 17–37 (ILIILGFSSVLAVIALIAVGL). Topologically, residues 38–478 (THNKPLPENV…LSPPLPHSTY (441 aa)) are extracellular. Residues 46-171 (NVKYGIVLDA…DFQGAKIITG (126 aa)) form an N-terminal lobe region. A glycan (N-linked (GlcNAc...) asparagine) is linked at asparagine 73. Cysteine 84 and cysteine 108 form a disulfide bridge. Glutamate 174 serves as the catalytic Proton acceptor. The tract at residues 205-441 (QATFGALDLG…GTSWDQIHFM (237 aa)) is C-terminal lobe. Residues asparagine 226, asparagine 291, and asparagine 333 are each glycosylated (N-linked (GlcNAc...) asparagine). Intrachain disulfides connect cysteine 254–cysteine 300 and cysteine 281–cysteine 324. Cysteine 337 and cysteine 342 form a disulfide bridge. Residue asparagine 374 is glycosylated (N-linked (GlcNAc...) asparagine). An intrachain disulfide couples cysteine 391 to cysteine 414. Asparagine 429 and asparagine 458 each carry an N-linked (GlcNAc...) asparagine glycan. The chain crosses the membrane as a helical span at residues 479–499 (ISLMVLFSLVLVAMVITGLFI). At 500–511 (FSKPSYFWKEAV) the chain is on the cytoplasmic side.

The protein belongs to the GDA1/CD39 NTPase family. In terms of assembly, homodimer; disulfide-linked. It depends on Ca(2+) as a cofactor. Mg(2+) serves as cofactor. N-glycosylated. In terms of processing, the N-terminus is blocked. Post-translationally, palmitoylated on Cys-13; which is required for caveola targeting. As to expression, expressed in primary neurons and astrocytes, kidney, liver, muscle, thymus, lung and spleen.

The protein resides in the membrane. It localises to the caveola. The catalysed reaction is a ribonucleoside 5'-triphosphate + 2 H2O = a ribonucleoside 5'-phosphate + 2 phosphate + 2 H(+). It catalyses the reaction a ribonucleoside 5'-triphosphate + H2O = a ribonucleoside 5'-diphosphate + phosphate + H(+). It carries out the reaction a ribonucleoside 5'-diphosphate + H2O = a ribonucleoside 5'-phosphate + phosphate + H(+). The enzyme catalyses ATP + 2 H2O = AMP + 2 phosphate + 2 H(+). The catalysed reaction is ATP + H2O = ADP + phosphate + H(+). It catalyses the reaction ADP + H2O = AMP + phosphate + H(+). It carries out the reaction CTP + 2 H2O = CMP + 2 phosphate + 2 H(+). The enzyme catalyses CTP + H2O = CDP + phosphate + H(+). The catalysed reaction is CDP + H2O = CMP + phosphate + H(+). It catalyses the reaction GTP + 2 H2O = GMP + 2 phosphate + 2 H(+). It carries out the reaction GTP + H2O = GDP + phosphate + H(+). The enzyme catalyses GDP + H2O = GMP + phosphate + H(+). The catalysed reaction is ITP + 2 H2O = IMP + 2 phosphate + 2 H(+). It catalyses the reaction ITP + H2O = IDP + phosphate + H(+). It carries out the reaction IDP + H2O = IMP + phosphate + H(+). The enzyme catalyses UTP + 2 H2O = UMP + 2 phosphate + 2 H(+). The catalysed reaction is UTP + H2O = UDP + phosphate + H(+). It catalyses the reaction UDP + H2O = UMP + phosphate + H(+). Catalyzes the hydrolysis of both di- and triphosphate nucleotides (NDPs and NTPs) and hydrolyze NTPs to nucleotide monophosphates (NMPs) in two distinct successive phosphate-releasing steps, with NDPs as intermediates and participates in the regulation of extracellular levels of nucleotides. By hydrolyzing proinflammatory ATP and platelet-activating ADP to AMP, it blocks platelet aggregation and supports blood flow. The sequence is that of Ectonucleoside triphosphate diphosphohydrolase 1 from Rattus norvegicus (Rat).